Reading from the N-terminus, the 238-residue chain is 4-hydroxy-tetrahydrodipicolinate reductase (238 aa).

An NAD(+)-binding site is contributed by 12–17; that stretch reads GASGRM. Arg-40 contacts NADP(+). NAD(+) contacts are provided by residues 93 to 95 and 117 to 120; these read GTT and ASNF. His-149 functions as the Proton donor/acceptor in the catalytic mechanism. Residue His-150 coordinates (S)-2,3,4,5-tetrahydrodipicolinate. Lys-153 functions as the Proton donor in the catalytic mechanism. 159–160 is a (S)-2,3,4,5-tetrahydrodipicolinate binding site; that stretch reads GT.

The protein belongs to the DapB family.

It is found in the cytoplasm. The catalysed reaction is (S)-2,3,4,5-tetrahydrodipicolinate + NAD(+) + H2O = (2S,4S)-4-hydroxy-2,3,4,5-tetrahydrodipicolinate + NADH + H(+). It carries out the reaction (S)-2,3,4,5-tetrahydrodipicolinate + NADP(+) + H2O = (2S,4S)-4-hydroxy-2,3,4,5-tetrahydrodipicolinate + NADPH + H(+). Its pathway is amino-acid biosynthesis; L-lysine biosynthesis via DAP pathway; (S)-tetrahydrodipicolinate from L-aspartate: step 4/4. Catalyzes the conversion of 4-hydroxy-tetrahydrodipicolinate (HTPA) to tetrahydrodipicolinate. The protein is 4-hydroxy-tetrahydrodipicolinate reductase of Xanthomonas campestris pv. campestris (strain 8004).